The following is a 377-amino-acid chain: Molybdenum import ATP-binding protein ModC (377 aa).

Residues 17 to 254 form the ABC transporter domain; the sequence is ITGDEAIRAR…LDLPFAHDED (238 aa). 52–59 contacts ATP; the sequence is GHSGSGKT. A Mop domain is found at 313–377; the sequence is DSSILNVLPA…AQVKGVALLR (65 aa).

It belongs to the ABC transporter superfamily. Molybdate importer (TC 3.A.1.8) family. As to quaternary structure, the complex is composed of two ATP-binding proteins (ModC), two transmembrane proteins (ModB) and a solute-binding protein (ModA).

It is found in the cell inner membrane. It carries out the reaction molybdate(out) + ATP + H2O = molybdate(in) + ADP + phosphate + H(+). Part of the ABC transporter complex ModABC involved in molybdenum import. Responsible for energy coupling to the transport system. The polypeptide is Molybdenum import ATP-binding protein ModC (Aromatoleum aromaticum (strain DSM 19018 / LMG 30748 / EbN1) (Azoarcus sp. (strain EbN1))).